The following is a 408-amino-acid chain: 1-deoxy-D-xylulose 5-phosphate reductoisomerase (408 aa).

The NADPH site is built by threonine 27, glycine 28, serine 29, isoleucine 30, alanine 53, arginine 54, asparagine 55, and asparagine 140. Lysine 141 lines the 1-deoxy-D-xylulose 5-phosphate pocket. Glutamate 142 contributes to the NADPH binding site. Aspartate 166 contacts Mn(2+). Residues serine 167, glutamate 168, serine 192, and histidine 215 each coordinate 1-deoxy-D-xylulose 5-phosphate. Glutamate 168 provides a ligand contact to Mn(2+). Glycine 221 contacts NADPH. Positions 228, 233, 234, and 237 each coordinate 1-deoxy-D-xylulose 5-phosphate. Glutamate 237 provides a ligand contact to Mn(2+).

This sequence belongs to the DXR family. Mg(2+) serves as cofactor. It depends on Mn(2+) as a cofactor.

The catalysed reaction is 2-C-methyl-D-erythritol 4-phosphate + NADP(+) = 1-deoxy-D-xylulose 5-phosphate + NADPH + H(+). It participates in isoprenoid biosynthesis; isopentenyl diphosphate biosynthesis via DXP pathway; isopentenyl diphosphate from 1-deoxy-D-xylulose 5-phosphate: step 1/6. Catalyzes the NADPH-dependent rearrangement and reduction of 1-deoxy-D-xylulose-5-phosphate (DXP) to 2-C-methyl-D-erythritol 4-phosphate (MEP). In Nitratidesulfovibrio vulgaris (strain ATCC 29579 / DSM 644 / CCUG 34227 / NCIMB 8303 / VKM B-1760 / Hildenborough) (Desulfovibrio vulgaris), this protein is 1-deoxy-D-xylulose 5-phosphate reductoisomerase.